Reading from the N-terminus, the 141-residue chain is Hemoglobin subunit alpha (141 aa).

The Globin domain maps to 1–141 (VLSATDKANV…VATVLTSKYR (141 aa)). The residue at position 3 (S3) is a Phosphoserine. N6-succinyllysine occurs at positions 7 and 11. At K16 the chain carries N6-acetyllysine; alternate. The residue at position 16 (K16) is an N6-succinyllysine; alternate. Y24 bears the Phosphotyrosine mark. Residue K40 is modified to N6-succinyllysine. H58 is an O2 binding site. H87 contributes to the heme b binding site. S102 is modified (phosphoserine). The residue at position 108 (T108) is a Phosphothreonine. A Phosphoserine modification is found at S124. Residues T134 and T137 each carry the phosphothreonine modification. A Phosphoserine modification is found at S138.

It belongs to the globin family. Heterotetramer of two alpha chains and two beta chains. In terms of tissue distribution, red blood cells.

Involved in oxygen transport from the lung to the various peripheral tissues. In terms of biological role, hemopressin acts as an antagonist peptide of the cannabinoid receptor CNR1. Hemopressin-binding efficiently blocks cannabinoid receptor CNR1 and subsequent signaling. The protein is Hemoglobin subunit alpha (HBA) of Erinaceus europaeus (Western European hedgehog).